The chain runs to 249 residues: GTP cyclohydrolase 1 type 2 homolog (249 aa).

The a divalent metal cation site is built by His-64, His-65, Asp-102, His-217, and Glu-221.

Belongs to the GTP cyclohydrolase I type 2/NIF3 family. In terms of assembly, homohexamer.

This is GTP cyclohydrolase 1 type 2 homolog from Neisseria meningitidis serogroup B (strain ATCC BAA-335 / MC58).